The primary structure comprises 236 residues: Uridylate kinase (236 aa).

10–13 (KLSG) contacts ATP. UMP is bound at residue Gly-52. 2 residues coordinate ATP: Gly-53 and Arg-57. UMP is bound by residues Asp-72 and 133-140 (TGNPFFTT). ATP is bound by residues Thr-160, Tyr-166, and Asp-169.

This sequence belongs to the UMP kinase family. In terms of assembly, homohexamer.

Its subcellular location is the cytoplasm. It catalyses the reaction UMP + ATP = UDP + ADP. The protein operates within pyrimidine metabolism; CTP biosynthesis via de novo pathway; UDP from UMP (UMPK route): step 1/1. With respect to regulation, inhibited by UTP. Catalyzes the reversible phosphorylation of UMP to UDP. This chain is Uridylate kinase, found in Cupriavidus necator (strain ATCC 17699 / DSM 428 / KCTC 22496 / NCIMB 10442 / H16 / Stanier 337) (Ralstonia eutropha).